Here is a 312-residue protein sequence, read N- to C-terminus: MAEFEDQLVFNSISARALKAYFTAKINEMVDELVTRKCPQKKKSQAKKPEVRIPVDLVKSSFVKKFGLCNYGGILISLINSLVENNFFTKDGKLDDTGKKELVLTDVEKRILNAIDKSSPLYIDISDVKVLAARLKRSATQFNFNGHTYHLENDKIEDLINQLVKDESIQLDEKSSIKDSMYVIPDELIDVLKTRLFRSPQVKDNIISRTRLYDYFTRVTKRDESSIYVILKDPRIASILSLETVKMGAFMYTKHSMLTNAISSRVDRYSKKFQESFYEDITEFVKENERVNVSRVVEYLTVPNITISSNAE.

The protein belongs to the orthopoxvirus OPG077 family.

Its subcellular location is the virion. Its function is as follows. DNA-binding protein which binds to the hairpin form of the viral telomeric sequence. Required for the production of mature virions (MV). This is Telomere-binding protein OPG077 (OPG077) from Vaccinia virus (strain L-IVP) (VACV).